The primary structure comprises 194 residues: Ras-like protein RAS1 (194 aa).

A GTP-binding site is contributed by 16-23 (GAGGVGKS). Residues 38–46 (YDPTIEDSY) carry the Effector region motif. GTP is bound by residues 63 to 67 (DTAGQ) and 122 to 125 (NKVD). Position 191 is a cysteine methyl ester (Cys-191). Cys-191 is lipidated: S-geranylgeranyl cysteine. A propeptide spans 192-194 (TLL) (removed in mature form).

Belongs to the small GTPase superfamily. Ras family.

Its subcellular location is the cell membrane. The catalysed reaction is GTP + H2O = GDP + phosphate + H(+). Alternates between an inactive form bound to GDP and an active form bound to GTP. Activated by a guanine nucleotide-exchange factor (GEF) and inactivated by a GTPase-activating protein (GAP). Functionally, ras proteins bind GDP/GTP and possess intrinsic GTPase activity. In Hydra vulgaris (Hydra), this protein is Ras-like protein RAS1 (RAS1).